Consider the following 149-residue polypeptide: Ribose-5-phosphate isomerase B (149 aa).

A D-ribulose 5-phosphate-binding site is contributed by 9-10; the sequence is DH. C66 functions as the Proton acceptor in the catalytic mechanism. 67 to 71 is a binding site for D-ribulose 5-phosphate; that stretch reads GTGVG. H99 (proton donor) is an active-site residue. Residues N100, R110, R133, and R137 each coordinate D-ribulose 5-phosphate.

This sequence belongs to the LacAB/RpiB family. Homodimer, and homotetramer.

It catalyses the reaction aldehydo-D-ribose 5-phosphate = D-ribulose 5-phosphate. The enzyme catalyses D-allose 6-phosphate = D-allulose 6-phosphate. The protein operates within carbohydrate degradation; pentose phosphate pathway; D-ribose 5-phosphate from D-ribulose 5-phosphate (non-oxidative stage): step 1/1. With respect to regulation, inhibited by iodoacetate and glucose 6-phosphate. Functionally, catalyzes the interconversion of ribulose-5-P and ribose-5-P. It probably also has activity on D-allose 6-phosphate. The sequence is that of Ribose-5-phosphate isomerase B from Escherichia coli (strain K12).